The following is a 109-amino-acid chain: MIKLKVKKGDEVVVITGKHKGKKGKILKVFPEDSKVIVSGVNVVKKHTKPNQMSEGGIITKELPIHISNIAHIDPKTGNPTKVAFKFLEDGSKVRVAKKSGEIIGKEGK.

The protein belongs to the universal ribosomal protein uL24 family. As to quaternary structure, part of the 50S ribosomal subunit.

One of two assembly initiator proteins, it binds directly to the 5'-end of the 23S rRNA, where it nucleates assembly of the 50S subunit. In terms of biological role, one of the proteins that surrounds the polypeptide exit tunnel on the outside of the subunit. The chain is Large ribosomal subunit protein uL24 from Rickettsia rickettsii (strain Iowa).